The primary structure comprises 1300 residues: uncharacterized protein (1300 aa).

Positions 1 to 1205 (MVLLRSGLGT…GKTLGLDPLY (1205 aa)) are disordered. Over residues 51–69 (GRKRKKGPKKSGGKKKKRK) the composition is skewed to basic residues. The span at 73–143 (EGPGGGEGPG…GPGGGEGPGG (71 aa)) shows a compositional bias: gly residues. A compositionally biased stretch (basic residues) spans 145–165 (SRKRKRGDGSKKHGGKKKKKT). The segment covering 237-246 (PDGPGAQEGP) has biased composition (low complexity). The span at 250-270 (EGPEGDEGPEGPEGPEGEGPE) shows a compositional bias: acidic residues. A compositionally biased stretch (low complexity) spans 280 to 289 (PDGPGAQEGP). Acidic residues-rich tracts occupy residues 295 to 343 (PDED…DSPD) and 357 to 417 (PDED…EGDS). Residues 418 to 427 (PDGPGAQEGP) show a composition bias toward low complexity. Composition is skewed to acidic residues over residues 431-469 (EGPE…PEGE), 477-494 (PEGE…EGPE), 517-558 (EGPE…EGPE), and 581-630 (EGPE…EGDS). The span at 674–686 (SGPGSSEGEGPSG) shows a compositional bias: gly residues. Composition is skewed to acidic residues over residues 713-726 (PDED…DGTE), 736-749 (PDED…DGTE), 759-772 (PDED…EGTE), and 820-883 (SDDE…EEEV). A compositionally biased stretch (basic and acidic residues) spans 903 to 917 (GEEKGEGEKGKGREE). Gly residues-rich tracts occupy residues 922-1010 (GGEG…GEGG) and 1021-1031 (GGEGGEGGEGG). Residues 1183-1195 (RPPKHHPQTKRAQ) are compositionally biased toward basic residues.

This is an uncharacterized protein from Connochaetes taurinus (Blue wildebeest).